The primary structure comprises 463 residues: D(2)-like dopamine receptor (463 aa).

Topologically, residues 1 to 35 are extracellular; that stretch reads MDVFTQYAYNDSIFDNGTWSANETTKDETHPYNYY. Residues Asn10, Asn16, and Asn22 are each glycosylated (N-linked (GlcNAc...) asparagine). Residues 36 to 58 form a helical membrane-spanning segment; sequence AMLLTLLIFVIVFGNVLVCMAVS. Over 59–68 the chain is Cytoplasmic; that stretch reads REKALQTTTN. Residues 69–91 form a helical membrane-spanning segment; the sequence is YLIVSLAVADLLVATLVMPWVVY. The Extracellular portion of the chain corresponds to 92 to 106; it reads LEVVGEWRFSKIHCD. A disulfide bridge links Cys105 with Cys183. The chain crosses the membrane as a helical span at residues 107–128; that stretch reads IFVTLDVMMCTASILNLCAISI. At 129–149 the chain is on the cytoplasmic side; it reads DRYTAVAMPMLYNTRYSSRRR. A helical transmembrane segment spans residues 150 to 170; it reads VTVMISVVWVLSFAISCPLLF. Over 171–189 the chain is Extracellular; the sequence is GLNNTATRDQSLCFIANPA. Residues 190–214 form a helical membrane-spanning segment; that stretch reads FVVYSSIVSFYVPFIVTLLVYVQIY. The Cytoplasmic portion of the chain corresponds to 215–392; that stretch reads VVLRKRRKRV…SQQKEKKATQ (178 aa). Residues 295 to 362 form a disordered region; the sequence is CGGSHKQPPP…KEAQGNPAPV (68 aa). Residues 315 to 329 show a composition bias toward polar residues; the sequence is PATSHQLLMSTKANA. Basic and acidic residues predominate over residues 341-353; sequence EGQRTEKNGDPTK. The helical transmembrane segment at 393-414 threads the bilayer; that stretch reads MLAIVLGVFIICWLPFFITHIL. The Extracellular portion of the chain corresponds to 415–429; it reads NTHCTRCKVPAEMYN. A disulfide bond links Cys418 and Cys421. A helical membrane pass occupies residues 430–451; it reads AFTWLGYVNSAVNPIIYTTFNV. Residues 452–463 lie on the Cytoplasmic side of the membrane; sequence EFRKAFIKILHC.

Belongs to the G-protein coupled receptor 1 family.

The protein resides in the cell membrane. Functionally, receptor for dopamine. This chain is D(2)-like dopamine receptor (d215), found in Takifugu rubripes (Japanese pufferfish).